The chain runs to 166 residues: Lipoprotein signal peptidase (166 aa).

The next 3 membrane-spanning stretches (helical) occupy residues Trp-12–Gln-32, Trp-70–Ser-90, and Ala-102–Val-122. Catalysis depends on residues Asp-123 and Asp-141. The chain crosses the membrane as a helical span at residues Phe-137–Leu-157.

It belongs to the peptidase A8 family.

The protein resides in the cell inner membrane. It catalyses the reaction Release of signal peptides from bacterial membrane prolipoproteins. Hydrolyzes -Xaa-Yaa-Zaa-|-(S,diacylglyceryl)Cys-, in which Xaa is hydrophobic (preferably Leu), and Yaa (Ala or Ser) and Zaa (Gly or Ala) have small, neutral side chains.. It participates in protein modification; lipoprotein biosynthesis (signal peptide cleavage). Its function is as follows. This protein specifically catalyzes the removal of signal peptides from prolipoproteins. This is Lipoprotein signal peptidase from Salmonella choleraesuis (strain SC-B67).